A 477-amino-acid polypeptide reads, in one-letter code: Bifunctional protein HldE (477 aa).

Residues 1-318 (MKVNLPAFER…ENAVRGRADT (318 aa)) are ribokinase. 195 to 198 (NLSE) is a binding site for ATP. Asp-264 is an active-site residue. The cytidylyltransferase stretch occupies residues 344-477 (MTNGVFDILH…IKKIQTESEK (134 aa)).

It in the N-terminal section; belongs to the carbohydrate kinase PfkB family. The protein in the C-terminal section; belongs to the cytidylyltransferase family. Homodimer.

It carries out the reaction D-glycero-beta-D-manno-heptose 7-phosphate + ATP = D-glycero-beta-D-manno-heptose 1,7-bisphosphate + ADP + H(+). It catalyses the reaction D-glycero-beta-D-manno-heptose 1-phosphate + ATP + H(+) = ADP-D-glycero-beta-D-manno-heptose + diphosphate. It participates in nucleotide-sugar biosynthesis; ADP-L-glycero-beta-D-manno-heptose biosynthesis; ADP-L-glycero-beta-D-manno-heptose from D-glycero-beta-D-manno-heptose 7-phosphate: step 1/4. The protein operates within nucleotide-sugar biosynthesis; ADP-L-glycero-beta-D-manno-heptose biosynthesis; ADP-L-glycero-beta-D-manno-heptose from D-glycero-beta-D-manno-heptose 7-phosphate: step 3/4. In terms of biological role, catalyzes the phosphorylation of D-glycero-D-manno-heptose 7-phosphate at the C-1 position to selectively form D-glycero-beta-D-manno-heptose-1,7-bisphosphate. Functionally, catalyzes the ADP transfer from ATP to D-glycero-beta-D-manno-heptose 1-phosphate, yielding ADP-D-glycero-beta-D-manno-heptose. The chain is Bifunctional protein HldE from Salmonella enteritidis PT4 (strain P125109).